A 515-amino-acid polypeptide reads, in one-letter code: Transcription termination factor Rho (515 aa).

In terms of domain architecture, Rho RNA-BD spans 146–221 (DVLFTGVLDV…VKIKSINDQD (76 aa)). ATP contacts are provided by residues 264–269 (GKGQRA), 276–281 (KAGKTT), and Arg307.

Belongs to the Rho family. Homohexamer. The homohexamer assembles into an open ring structure.

Its function is as follows. Facilitates transcription termination by a mechanism that involves Rho binding to the nascent RNA, activation of Rho's RNA-dependent ATPase activity, and release of the mRNA from the DNA template. In Borreliella burgdorferi (strain ATCC 35210 / DSM 4680 / CIP 102532 / B31) (Borrelia burgdorferi), this protein is Transcription termination factor Rho.